We begin with the raw amino-acid sequence, 92 residues long: Small ribosomal subunit protein uS19 (92 aa).

The protein belongs to the universal ribosomal protein uS19 family.

Protein S19 forms a complex with S13 that binds strongly to the 16S ribosomal RNA. The sequence is that of Small ribosomal subunit protein uS19 from Bifidobacterium animalis subsp. lactis (strain AD011).